The primary structure comprises 65 residues: Large ribosomal subunit protein uL29 (65 aa).

It belongs to the universal ribosomal protein uL29 family.

This is Large ribosomal subunit protein uL29 from Xylella fastidiosa (strain Temecula1 / ATCC 700964).